Consider the following 192-residue polypeptide: Xanthine phosphoribosyltransferase (192 aa).

2 residues coordinate xanthine: Leu20 and Asn27. Position 128-132 (128-132) interacts with 5-phospho-alpha-D-ribose 1-diphosphate; sequence ANGDA. Position 156 (Lys156) interacts with xanthine.

This sequence belongs to the purine/pyrimidine phosphoribosyltransferase family. Xpt subfamily. As to quaternary structure, homodimer.

The protein resides in the cytoplasm. It carries out the reaction XMP + diphosphate = xanthine + 5-phospho-alpha-D-ribose 1-diphosphate. It functions in the pathway purine metabolism; XMP biosynthesis via salvage pathway; XMP from xanthine: step 1/1. In terms of biological role, converts the preformed base xanthine, a product of nucleic acid breakdown, to xanthosine 5'-monophosphate (XMP), so it can be reused for RNA or DNA synthesis. In Staphylococcus epidermidis (strain ATCC 35984 / DSM 28319 / BCRC 17069 / CCUG 31568 / BM 3577 / RP62A), this protein is Xanthine phosphoribosyltransferase.